Reading from the N-terminus, the 566-residue chain is 3'-5' exoribonuclease parn-1 (566 aa).

A divalent metal cation is bound by residues aspartate 29, glutamate 31, aspartate 283, and aspartate 379.

This sequence belongs to the CAF1 family. A divalent metal cation is required as a cofactor. In terms of tissue distribution, expressed in germline cells.

The protein resides in the cytoplasm. Its function is as follows. Involved in transcriptome surveillance. Required for piwi-interacting RNAs (piRNAs) 3'-end trimming, which is important for both fertility and piRNA-directed gene silencing. Has 3' to 5' exonuclease activity in vitro. In Caenorhabditis elegans, this protein is 3'-5' exoribonuclease parn-1.